Consider the following 526-residue polypeptide: Microphthalmia-associated transcription factor (526 aa).

The interval 20 to 54 (EPKTYYELKSQPLKSSSSAEHSGASKPPLSSSTMT) is disordered. Residues 34 to 44 (SSSSAEHSGAS) show a composition bias toward low complexity. Ser180 carries the post-translational modification Phosphoserine; by MAPK. A Glycyl lysine isopeptide (Lys-Gly) (interchain with G-Cter in SUMO) cross-link involves residue Lys289. The bHLH domain maps to 311–364 (QKKDNHNLIERRRRFNINDRIKELGTLIPKSNDPDMRWNKGTILKASVDYIRKL). Residues 355–401 (KASVDYIRKLQREQQRAKDLENRQKKLEHANRHLLLRVQELEMQARA) are a coiled coil. Residues 374–395 (LENRQKKLEHANRHLLLRVQEL) form a leucine-zipper region. Ser405 is modified (phosphoserine; by GSK3). A Phosphoserine modification is found at Ser414. Lys423 is covalently cross-linked (Glycyl lysine isopeptide (Lys-Gly) (interchain with G-Cter in SUMO)). Ser491 bears the Phosphoserine mark. Residues 496 to 526 (TDPLLSSVSPGASKTSSRRSSMSAEETEHAC) form a disordered region. The segment covering 507 to 519 (ASKTSSRRSSMSA) has biased composition (low complexity). Ser516 carries the post-translational modification Phosphoserine; by RPS6KA1.

This sequence belongs to the MiT/TFE family. Homodimer or heterodimer; dimerization is mediated via the coiled coil region. Efficient DNA binding requires dimerization with another bHLH protein. Binds DNA in the form of homodimer or heterodimer with either TFE3, TFEB or TFEC. Identified in a complex with HINT1 and CTNNB1. Interacts with KARS1. Interacts with VSX2. Post-translationally, phosphorylation at Ser-405 significantly enhances the ability to bind the tyrosinase promoter. Phosphorylated at Ser-180 and Ser-516 following KIT signaling, triggering a short live activation: Phosphorylation at Ser-180 and Ser-516 by MAPK and RPS6KA1, respectively, activate the transcription factor activity but also promote ubiquitination and subsequent degradation by the proteasome. Phosphorylated in response to blue light (415nm). In terms of processing, ubiquitinated following phosphorylation at Ser-180, leading to subsequent degradation by the proteasome. Deubiquitinated by USP13, preventing its degradation.

The protein resides in the nucleus. It localises to the cytoplasm. Transcription factor that regulates the expression of genes with essential roles in cell differentiation, proliferation and survival. Binds to M-boxes (5'-TCATGTG-3') and symmetrical DNA sequences (E-boxes) (5'-CACGTG-3') found in the promoters of target genes, such as BCL2 and tyrosinase (TYR). Plays an important role in melanocyte development by regulating the expression of tyrosinase (TYR) and tyrosinase-related protein 1 (TYRP1). Plays a critical role in the differentiation of various cell types, such as neural crest-derived melanocytes, mast cells, osteoclasts and optic cup-derived retinal pigment epithelium. In Rattus norvegicus (Rat), this protein is Microphthalmia-associated transcription factor (Mitf).